The chain runs to 183 residues: Potassium-transporting ATPase KdpC subunit (183 aa).

The chain crosses the membrane as a helical span at residues 11 to 31 (LILLLAVVTGALYPLAVTGVA).

The protein belongs to the KdpC family. As to quaternary structure, the system is composed of three essential subunits: KdpA, KdpB and KdpC.

The protein localises to the cell inner membrane. Part of the high-affinity ATP-driven potassium transport (or Kdp) system, which catalyzes the hydrolysis of ATP coupled with the electrogenic transport of potassium into the cytoplasm. This subunit acts as a catalytic chaperone that increases the ATP-binding affinity of the ATP-hydrolyzing subunit KdpB by the formation of a transient KdpB/KdpC/ATP ternary complex. The chain is Potassium-transporting ATPase KdpC subunit from Pseudomonas putida (strain W619).